The chain runs to 198 residues: Thioredoxin reductase-like selenoprotein T homolog CG3887 (198 aa).

A signal peptide spans 1 to 25 (MERLTGRNVALLVLCLCAGYALVFA). The cysteines at positions 49 and 52 are disulfide-linked.

This sequence belongs to the SelWTH family. SELT subfamily.

The enzyme catalyses [thioredoxin]-dithiol + NADP(+) = [thioredoxin]-disulfide + NADPH + H(+). In terms of biological role, probably has thioredoxin reductase-like oxidoreductase activity. The polypeptide is Thioredoxin reductase-like selenoprotein T homolog CG3887 (Drosophila melanogaster (Fruit fly)).